The following is an 82-amino-acid chain: Small ribosomal subunit protein bS16 (82 aa).

This sequence belongs to the bacterial ribosomal protein bS16 family.

The chain is Small ribosomal subunit protein bS16 from Aliivibrio fischeri (strain ATCC 700601 / ES114) (Vibrio fischeri).